The following is a 37-amino-acid chain: Large ribosomal subunit protein bL36 (37 aa).

The protein belongs to the bacterial ribosomal protein bL36 family.

In Acidithiobacillus ferrooxidans (strain ATCC 23270 / DSM 14882 / CIP 104768 / NCIMB 8455) (Ferrobacillus ferrooxidans (strain ATCC 23270)), this protein is Large ribosomal subunit protein bL36.